The chain runs to 280 residues: MKKTALTIITIASGSLGAVYFLPSEPAVQKDIRATSQHDTSVDNTSPKAFLDYSLSTLGEKPWQTITQDVVSEERALGELQLDEQLFALYLRYKQALADLDIEITGSDITSLETLHQAILDLQREYFSAQQIDLIFGEENQLRALALEKARLSEQGYSAEEQKQLWRDHLALQPEYVQESDANRRLMSELAQGEDAQTTYLKRVELVGEAGAQRLEVLDQNRAEFDRVFQHYLVQRSAILDDLGLSDEQKRQQIKMLRETSFDAKQWRRIEALERIADGG.

Residues 5–22 (ALTIITIASGSLGAVYFL) traverse the membrane as a helical segment.

This sequence belongs to the lipase chaperone family.

Its subcellular location is the cell inner membrane. Its function is as follows. May be involved in the folding of the extracellular lipase during its passage through the periplasm. In Vibrio vulnificus (strain YJ016), this protein is Lipase chaperone (lifO).